Here is a 133-residue protein sequence, read N- to C-terminus: Holo-[acyl-carrier-protein] synthase (133 aa).

Mg(2+)-binding residues include Asp-8 and Glu-56.

The protein belongs to the P-Pant transferase superfamily. AcpS family. Mg(2+) serves as cofactor.

It is found in the cytoplasm. The catalysed reaction is apo-[ACP] + CoA = holo-[ACP] + adenosine 3',5'-bisphosphate + H(+). In terms of biological role, transfers the 4'-phosphopantetheine moiety from coenzyme A to a Ser of acyl-carrier-protein. In Clostridium perfringens (strain ATCC 13124 / DSM 756 / JCM 1290 / NCIMB 6125 / NCTC 8237 / Type A), this protein is Holo-[acyl-carrier-protein] synthase.